We begin with the raw amino-acid sequence, 373 residues long: Flagellar P-ring protein (373 aa).

An N-terminal signal peptide occupies residues 1–26; it reads MRLLFRFLTLVAVLAMSLADVAPAWA.

This sequence belongs to the FlgI family. As to quaternary structure, the basal body constitutes a major portion of the flagellar organelle and consists of four rings (L,P,S, and M) mounted on a central rod.

Its subcellular location is the periplasm. It localises to the bacterial flagellum basal body. Functionally, assembles around the rod to form the L-ring and probably protects the motor/basal body from shearing forces during rotation. The chain is Flagellar P-ring protein from Rhizobium etli (strain CIAT 652).